The primary structure comprises 143 residues: Transcriptional regulator MraZ (143 aa).

SpoVT-AbrB domains lie at 5–47 (EFRH…PMNE) and 76–119 (ASEC…SQEK).

The protein belongs to the MraZ family. Forms oligomers.

Its subcellular location is the cytoplasm. The protein localises to the nucleoid. In Natranaerobius thermophilus (strain ATCC BAA-1301 / DSM 18059 / JW/NM-WN-LF), this protein is Transcriptional regulator MraZ.